Consider the following 418-residue polypeptide: NADH-quinone oxidoreductase subunit D (418 aa).

This sequence belongs to the complex I 49 kDa subunit family. NDH-1 is composed of 14 different subunits. Subunits NuoB, C, D, E, F, and G constitute the peripheral sector of the complex.

The protein resides in the cell inner membrane. It carries out the reaction a quinone + NADH + 5 H(+)(in) = a quinol + NAD(+) + 4 H(+)(out). Functionally, NDH-1 shuttles electrons from NADH, via FMN and iron-sulfur (Fe-S) centers, to quinones in the respiratory chain. The immediate electron acceptor for the enzyme in this species is believed to be ubiquinone. Couples the redox reaction to proton translocation (for every two electrons transferred, four hydrogen ions are translocated across the cytoplasmic membrane), and thus conserves the redox energy in a proton gradient. The protein is NADH-quinone oxidoreductase subunit D of Bordetella bronchiseptica (strain ATCC BAA-588 / NCTC 13252 / RB50) (Alcaligenes bronchisepticus).